The following is a 320-amino-acid chain: FHA domain-containing protein FHA2 (320 aa).

Alanine 2 is modified (N-acetylalanine). The region spanning isoleucine 32–histidine 89 is the FHA domain. A disordered region spans residues valine 138–glutamate 211. Residues glutamate 163–aspartate 178 are compositionally biased toward acidic residues. Basic and acidic residues predominate over residues glycine 198 to arginine 210.

Widely expressed.

It is found in the nucleus. Functionally, may play a role in the control of plant organ development and specifically in the regulation of stamen development. Does not show transactivation activity in yeast. This Arabidopsis thaliana (Mouse-ear cress) protein is FHA domain-containing protein FHA2.